The sequence spans 977 residues: MLLWVILLVLAPVSGQFARTPRPIIFLQPPWTTVFQGERVTLTCKGFRFYSPQKTKWYHRYLGKEILRETPDNILEVQESGEYRCQAQGSPLSSPVHLDFSSASLILQAPLSVFEGDSVVLRCRAKAEVTLNNTIYKNDNVLAFLNKRTDFHIPHACLKDNGAYRCTGYKESCCPVSSNTVKIQVQEPFTRPVLRASSFQPISGNPVTLTCETQLSLERSDVPLRFRFFRDDQTLGLGWSLSPNFQITAMWSKDSGFYWCKAATMPYSVISDSPRSWIQVQIPASHPVLTLSPEKALNFEGTKVTLHCETQEDSLRTLYRFYHEGVPLRHKSVRCERGASISFSLTTENSGNYYCTADNGLGAKPSKAVSLSVTVPVSHPVLNLSSPEDLIFEGAKVTLHCEAQRGSLPILYQFHHEGAALERRSANSAGGVAISFSLTAEHSGNYYCTADNGFGPQRSKAVSLSVTVPVSHPVLTLSSAEALTFEGATVTLHCEVQRGSPQILYQFYHEDMPLWSSSTPSVGRVSFSFSLTEGHSGNYYCTADNGFGPQRSEVVSLFVTVPVSRPILTLRVPRAQAVVGDLLELHCEAPRGSPPILYWFYHEDVTLGSSSAPSGGEASFNLSLTAEHSGNYSCEANNGLVAQHSDTISLSVIVPVSRPILTFRAPRAQAVVGDLLELHCEALRGSSPILYWFYHEDVTLGKISAPSGGGASFNLSLTTEHSGIYSCEADNGLEAQRSEMVTLKVAVPVSRPVLTLRAPGTHAAVGDLLELHCEALRGSPLILYRFFHEDVTLGNRSSPSGGASLNLSLTAEHSGNYSCEADNGLGAQRSETVTLYITGLTANRSGPFATGVAGGLLSIAGLAAGALLLYCWLSRKAGRKPASDPARSPSDSDSQEPTYHNVPAWEELQPVYTNANPRGENVVYSEVRIIQEKKKHAVASDPRHLRNKGSPIIYSEVKVASTPVSGSLFLASSAPHR.

The N-terminal stretch at 1 to 15 (MLLWVILLVLAPVSG) is a signal peptide. At 16 to 851 (QFARTPRPII…ANRSGPFATG (836 aa)) the chain is on the extracellular side. Ig-like C2-type domains lie at 23–101 (PIIF…LDFS), 188–271 (PFTR…SVIS), 287–374 (PVLT…LSVT), 380–463 (PVLN…KAVS), 473–556 (PVLT…EVVS), 566–651 (PILT…ISLS), 659–744 (PILT…VTLK), and 752–834 (PVLT…ETVT). Cystine bridges form between Cys44–Cys85, Cys211–Cys260, and Cys308–Cys355. Residue Asn383 is glycosylated (N-linked (GlcNAc...) asparagine). Intrachain disulfides connect Cys401-Cys448, Cys494-Cys541, Cys587-Cys634, Cys680-Cys727, and Cys773-Cys819. A helical transmembrane segment spans residues 852–872 (VAGGLLSIAGLAAGALLLYCW). The Cytoplasmic segment spans residues 873–977 (LSRKAGRKPA…LFLASSAPHR (105 aa)). Positions 879-898 (RKPASDPARSPSDSDSQEPT) are disordered. A compositionally biased stretch (low complexity) spans 883–892 (SDPARSPSDS). 4 short sequence motifs (ITIM motif) span residues 897–902 (PTYHNV), 910–915 (PVYTNA), 922–927 (VVYSEV), and 952–957 (IIYSEV).

In terms of assembly, interacts with CR2. Interacts with CD19. Expressed in marginal zone B-cells, immunoblasts, tonsillar germinal center centrocytes and in the intraepithelial and interfollicular regions of the tonsil. Expressed in many lymphoma cell lines and on hairy cell leukemia cells. Isoform 1, isoform 3, isoform 4 and isoform 5 are detected in lymph node, spleen, bone marrow, and small intestine with preponderance of isoform 3. Expressed in mature and memory B-cells and down-regulated in germinal center cells (at protein level).

The protein localises to the cell membrane. Its function is as follows. Plays an important role in B-cell response to antigen that acts both as a negative or positive coreceptor. Inhibits B-cell receptor (BCR) signaling in the absence of CR2 stimulation but engagement with CR2 and the BCR lead to a superior calcium response compared to CR2 and BCR costimulation. May be involved in B-cell development and differentiation in peripheral lymphoid organs and may be useful markers of B-cell stages. May have an immunoregulatory role in marginal zone B-cells. May play a role in fertilization. This is Fc receptor-like protein 5 (FCRL5) from Homo sapiens (Human).